Reading from the N-terminus, the 184-residue chain is Bifunctional protein PyrR (184 aa).

The short motif at 98-110 (VVLVDDVLYTGRT) is the PRPP-binding element.

This sequence belongs to the purine/pyrimidine phosphoribosyltransferase family. PyrR subfamily.

The enzyme catalyses UMP + diphosphate = 5-phospho-alpha-D-ribose 1-diphosphate + uracil. Regulates the transcription of the pyrimidine nucleotide (pyr) operon in response to exogenous pyrimidines. Functionally, also displays a weak uracil phosphoribosyltransferase activity which is not physiologically significant. This Roseiflexus castenholzii (strain DSM 13941 / HLO8) protein is Bifunctional protein PyrR.